Consider the following 345-residue polypeptide: uncharacterized protein (345 aa).

Helical transmembrane passes span 9-31 (VVAF…AAFV), 84-103 (TLVA…TYLL), 116-138 (YFSL…ILYT), 148-170 (VPMQ…SGIF), 182-204 (VVFV…TIHA), 269-286 (WFFW…GVLG), 291-308 (ISHY…IAGY), and 313-335 (HGLT…VFFI).

Its subcellular location is the cell membrane. This is an uncharacterized protein from Treponema pallidum (strain Nichols).